Consider the following 536-residue polypeptide: Phosphoenolpyruvate carboxykinase (ATP) (536 aa).

Residues Arg61, Tyr195, and Lys201 each coordinate substrate. ATP is bound by residues Lys201, His220, and 236–244; that span reads GLSGTGKTT. Mn(2+)-binding residues include Lys201 and His220. Asp257 serves as a coordination point for Mn(2+). Positions 285, 322, and 447 each coordinate ATP. Arg322 is a binding site for substrate.

It belongs to the phosphoenolpyruvate carboxykinase (ATP) family. The cofactor is Mn(2+).

It is found in the cytoplasm. The enzyme catalyses oxaloacetate + ATP = phosphoenolpyruvate + ADP + CO2. Its pathway is carbohydrate biosynthesis; gluconeogenesis. Functionally, involved in the gluconeogenesis. Catalyzes the conversion of oxaloacetate (OAA) to phosphoenolpyruvate (PEP) through direct phosphoryl transfer between the nucleoside triphosphate and OAA. This chain is Phosphoenolpyruvate carboxykinase (ATP), found in Brucella suis biovar 1 (strain 1330).